The chain runs to 388 residues: Formate-dependent phosphoribosylglycinamide formyltransferase (388 aa).

Residues 20-21 and glutamate 80 contribute to the N(1)-(5-phospho-beta-D-ribosyl)glycinamide site; that span reads EL. ATP is bound by residues arginine 112, lysine 153, 158–163, 193–196, and glutamate 201; these read SSGKGQ and EEFI. The region spanning 117–306 is the ATP-grasp domain; sequence RLAFEKLGLR…EFEIHARAIL (190 aa). Positions 265 and 277 each coordinate Mg(2+). Residues aspartate 284, lysine 352, and 359–360 contribute to the N(1)-(5-phospho-beta-D-ribosyl)glycinamide site; that span reads RR.

The protein belongs to the PurK/PurT family. Homodimer.

It catalyses the reaction N(1)-(5-phospho-beta-D-ribosyl)glycinamide + formate + ATP = N(2)-formyl-N(1)-(5-phospho-beta-D-ribosyl)glycinamide + ADP + phosphate + H(+). Its pathway is purine metabolism; IMP biosynthesis via de novo pathway; N(2)-formyl-N(1)-(5-phospho-D-ribosyl)glycinamide from N(1)-(5-phospho-D-ribosyl)glycinamide (formate route): step 1/1. Involved in the de novo purine biosynthesis. Catalyzes the transfer of formate to 5-phospho-ribosyl-glycinamide (GAR), producing 5-phospho-ribosyl-N-formylglycinamide (FGAR). Formate is provided by PurU via hydrolysis of 10-formyl-tetrahydrofolate. The polypeptide is Formate-dependent phosphoribosylglycinamide formyltransferase (Methanococcus maripaludis (strain C7 / ATCC BAA-1331)).